We begin with the raw amino-acid sequence, 161 residues long: MLTHLDSQGRANMVDVTDKAVTSREAVAEAVVRMLPTTLQMIVSGGHPKGDVFAVARIAGIQAAKKTSDLIPLCHPLMLTSIKVHLAADGDDAVRITASCKLAGQTGVEMEALTAASIAALTIYDMCKAVDRGMVIESVRLLEKLGGKSGHFIADQAQVSS.

Substrate contacts are provided by residues 73 to 75 (LCH) and 110 to 111 (ME). D125 is an active-site residue.

It belongs to the MoaC family. As to quaternary structure, homohexamer; trimer of dimers.

It catalyses the reaction (8S)-3',8-cyclo-7,8-dihydroguanosine 5'-triphosphate = cyclic pyranopterin phosphate + diphosphate. Its pathway is cofactor biosynthesis; molybdopterin biosynthesis. Functionally, catalyzes the conversion of (8S)-3',8-cyclo-7,8-dihydroguanosine 5'-triphosphate to cyclic pyranopterin monophosphate (cPMP). In Pseudomonas savastanoi pv. phaseolicola (strain 1448A / Race 6) (Pseudomonas syringae pv. phaseolicola (strain 1448A / Race 6)), this protein is Cyclic pyranopterin monophosphate synthase.